The primary structure comprises 61 residues: Photosystem II reaction center protein K (61 aa).

Positions 1–24 (MLNIFSLICICINSALHSSSFFFA) are excised as a propeptide. A helical membrane pass occupies residues 40–60 (MPVIPVLFFLLALVWQAAVSF).

This sequence belongs to the PsbK family. As to quaternary structure, PSII is composed of 1 copy each of membrane proteins PsbA, PsbB, PsbC, PsbD, PsbE, PsbF, PsbH, PsbI, PsbJ, PsbK, PsbL, PsbM, PsbT, PsbX, PsbY, PsbZ, Psb30/Ycf12, at least 3 peripheral proteins of the oxygen-evolving complex and a large number of cofactors. It forms dimeric complexes.

The protein localises to the plastid. Its subcellular location is the chloroplast thylakoid membrane. One of the components of the core complex of photosystem II (PSII). PSII is a light-driven water:plastoquinone oxidoreductase that uses light energy to abstract electrons from H(2)O, generating O(2) and a proton gradient subsequently used for ATP formation. It consists of a core antenna complex that captures photons, and an electron transfer chain that converts photonic excitation into a charge separation. The chain is Photosystem II reaction center protein K from Liriodendron tulipifera (Tuliptree).